Consider the following 579-residue polypeptide: Glucose starvation modulator protein 1 (579 aa).

A DNA-binding region (zn(2)-C6 fungal-type) is located at residues 20–48 (CVFCHEKHLQCDLGRPCQNCSKRGIGDTC). Residues 43–53 (GIGDTCRDKER) show a composition bias toward basic and acidic residues. Disordered stretches follow at residues 43–75 (GIGD…STKS) and 319–342 (QMAS…GETV). The segment covering 54-64 (KPRKRGPRKVK) has biased composition (basic residues). Positions 330-339 (NDTSPESQGG) are enriched in polar residues. The region spanning 444–516 (LLEYESMAKL…DIFHEYLAFG (73 aa)) is the PAS domain.

Belongs to the ERT1/acuK family.

Its subcellular location is the nucleus. In terms of biological role, transcription factor which regulates nonfermentable carbon utilization. This is Glucose starvation modulator protein 1 (GSM1) from Kluyveromyces lactis (strain ATCC 8585 / CBS 2359 / DSM 70799 / NBRC 1267 / NRRL Y-1140 / WM37) (Yeast).